Reading from the N-terminus, the 763-residue chain is ATP-dependent RNA helicase glh-1 (763 aa).

The tract at residues 1 to 30 (MSDGWSDSESAAKAKTGFGSGGGFGGGNNG) is disordered. Over residues 18–30 (FGSGGGFGGGNNG) the composition is skewed to gly residues. 7 tandem repeats follow at residues 24-33 (FGGGNNGGSG), 34-43 (FGGGKNGGTG), 44-53 (FGGGNTGGSG), 54-63 (FGGGNTGGSG), 64-73 (FGGGKTGGSG), 74-83 (FGGGNTCGSG), and 84-93 (FGGGSTGGSP). Positions 24–93 (FGGGNNGGSG…FGGGSTGGSP (70 aa)) are 7 X 10 AA tandem repeats, Gly-rich. CCHC-type zinc fingers lie at residues 158 to 175 (NNCFNCQQPGHRSSDCPE) and 183 to 200 (RVCYNCQQPGHTSRECTE). Residues 193–230 (HTSRECTEERKPREGRTGGFGGGAGFGNNGGNDGFGGD) are disordered. Basic and acidic residues predominate over residues 194-208 (TSRECTEERKPREGR). The span at 209 to 230 (TGGFGGGAGFGNNGGNDGFGGD) shows a compositional bias: gly residues. CCHC-type zinc fingers lie at residues 242-259 (MKCFNCKGEGHRSAECPE) and 262-279 (RGCFNCGEQGHRSNECPN). A Q motif motif is present at residues 341–369 (KTFAEANLTETMQKNVAHAGYSKTTPIQQ). Residues 372–556 (LPLVHQGYDI…RAFLRENYVM (185 aa)) form the Helicase ATP-binding domain. 385-392 (AQTGSGKT) lines the ATP pocket. Residues 423-427 (ILTPT) carry the Phosphodegron motif. Residues 499–502 (DEAD) carry the DEAD box motif. Residues 592-739 (DIDSYTTEKS…IVPDWMQGAA (148 aa)) form the Helicase C-terminal domain.

This sequence belongs to the DEAD box helicase family. DDX4/VASA subfamily. In terms of assembly, interacts with csn-5; this may prevent glh-1 degradation induced by kgb-1. Interacts with zyx-1. Interacts (via the N-terminal region containing the four CCHC zinc fingers) with pan-1. Interacts with kgb-1; this may promote glh-1 degradation by the proteasome. In terms of processing, phosphorylated by kgb-1 (in vitro); this may be responsible for its degradation by the proteasome.

Its subcellular location is the cytoplasm. It localises to the cytoplasmic granule. It is found in the perinuclear region. The catalysed reaction is ATP + H2O = ADP + phosphate + H(+). In terms of biological role, probable ATP-binding RNA helicase. May act redundantly with the P-granule component glh-4 to regulate the formation of the granular structure of P-granules in embryos. Plays a role in positively regulating the localization of pgl-1 to P-granules. May play a role in transgenerational epigenetic inheritance. May protect somatic cells from excessive apoptosis during normal development. This Caenorhabditis elegans protein is ATP-dependent RNA helicase glh-1.